Consider the following 258-residue polypeptide: Snake venom serine protease 5 (258 aa).

Residues 1–18 (MVLIRVLANLLILQLSYA) form the signal peptide. Positions 19–24 (QKSSEL) are excised as a propeptide. Positions 25–249 (VVGGRPCNIN…HLDWIQNIIA (225 aa)) constitute a Peptidase S1 domain. 6 cysteine pairs are disulfide-bonded: Cys-31–Cys-163, Cys-50–Cys-66, Cys-98–Cys-256, Cys-142–Cys-210, Cys-174–Cys-189, and Cys-200–Cys-225. Asn-44 carries an N-linked (GlcNAc...) asparagine glycan. His-65 acts as the Charge relay system in catalysis. Asn-103 carries N-linked (GlcNAc...) asparagine glycosylation. Asp-110 functions as the Charge relay system in the catalytic mechanism. Residues Asn-121, Asn-122, Asn-154, and Asn-170 are each glycosylated (N-linked (GlcNAc...) asparagine). The active-site Charge relay system is Ser-204. Residue Asn-251 is glycosylated (N-linked (GlcNAc...) asparagine).

Belongs to the peptidase S1 family. Snake venom subfamily. As to quaternary structure, monomer. As to expression, expressed by the venom gland.

It localises to the secreted. In terms of biological role, snake venom serine protease that may act in the hemostasis system of the prey. This is Snake venom serine protease 5 from Trimeresurus stejnegeri (Chinese green tree viper).